Reading from the N-terminus, the 301-residue chain is 4-hydroxybenzoate octaprenyltransferase (301 aa).

8 consecutive transmembrane segments (helical) span residues Ile-34–Leu-54, Leu-57–Ile-77, Leu-108–Leu-128, Leu-152–Val-172, Val-176–Thr-196, Phe-221–Gly-241, Asp-245–Phe-265, and Ala-279–Ala-299.

Belongs to the UbiA prenyltransferase family. The cofactor is Mg(2+).

It is found in the cell inner membrane. The enzyme catalyses all-trans-octaprenyl diphosphate + 4-hydroxybenzoate = 4-hydroxy-3-(all-trans-octaprenyl)benzoate + diphosphate. The protein operates within cofactor biosynthesis; ubiquinone biosynthesis. In terms of biological role, catalyzes the prenylation of para-hydroxybenzoate (PHB) with an all-trans polyprenyl group. Mediates the second step in the final reaction sequence of ubiquinone-8 (UQ-8) biosynthesis, which is the condensation of the polyisoprenoid side chain with PHB, generating the first membrane-bound Q intermediate 3-octaprenyl-4-hydroxybenzoate. The chain is 4-hydroxybenzoate octaprenyltransferase from Xanthomonas euvesicatoria pv. vesicatoria (strain 85-10) (Xanthomonas campestris pv. vesicatoria).